Reading from the N-terminus, the 175-residue chain is tRNA (cytidine(56)-2'-O)-methyltransferase (175 aa).

Residue Leu82 coordinates S-adenosyl-L-methionine.

The protein belongs to the aTrm56 family. Homodimer.

It is found in the cytoplasm. It catalyses the reaction cytidine(56) in tRNA + S-adenosyl-L-methionine = 2'-O-methylcytidine(56) in tRNA + S-adenosyl-L-homocysteine + H(+). Its function is as follows. Specifically catalyzes the AdoMet-dependent 2'-O-ribose methylation of cytidine at position 56 in tRNAs. The polypeptide is tRNA (cytidine(56)-2'-O)-methyltransferase (Cenarchaeum symbiosum (strain A)).